The primary structure comprises 144 residues: MKIWIDADGCPVVDLTIRLSRGYEVFLVCDTAHQFNRAGATTITIGQGHDAVDFAIVNRMAPGDIVVTQDYGLAALALARKGQAIDQNGRVFTNENIDFLLHTRHVGQEIRRAGGRTKGPKKRTRQEDASFEQSFSRLLTEKTD.

The interval 110-144 (IRRAGGRTKGPKKRTRQEDASFEQSFSRLLTEKTD) is disordered. Basic residues predominate over residues 113–124 (AGGRTKGPKKRT).

The protein belongs to the UPF0178 family.

The chain is UPF0178 protein Exig_1155 from Exiguobacterium sibiricum (strain DSM 17290 / CCUG 55495 / CIP 109462 / JCM 13490 / 255-15).